A 346-amino-acid polypeptide reads, in one-letter code: tRNA N6-adenosine threonylcarbamoyltransferase (346 aa).

Fe cation-binding residues include H111 and H115. Substrate is bound by residues 134–138, D167, G180, and N279; that span reads LVSGG. Residue D307 participates in Fe cation binding.

It belongs to the KAE1 / TsaD family. Fe(2+) is required as a cofactor.

It localises to the cytoplasm. It carries out the reaction L-threonylcarbamoyladenylate + adenosine(37) in tRNA = N(6)-L-threonylcarbamoyladenosine(37) in tRNA + AMP + H(+). Functionally, required for the formation of a threonylcarbamoyl group on adenosine at position 37 (t(6)A37) in tRNAs that read codons beginning with adenine. Is involved in the transfer of the threonylcarbamoyl moiety of threonylcarbamoyl-AMP (TC-AMP) to the N6 group of A37, together with TsaE and TsaB. TsaD likely plays a direct catalytic role in this reaction. In Burkholderia cenocepacia (strain HI2424), this protein is tRNA N6-adenosine threonylcarbamoyltransferase.